A 559-amino-acid polypeptide reads, in one-letter code: 5'-AMP-activated protein kinase catalytic subunit alpha-1 (559 aa).

Positions 27–279 (YILGDTLGVG…IKDIREHEWF (253 aa)) constitute a Protein kinase domain. Threonine 32 carries the phosphothreonine modification. ATP is bound by residues 33 to 41 (LGVGTFGKV) and lysine 56. The Proton acceptor role is filled by aspartate 150. Position 183 is a phosphothreonine; by LKB1 and CaMKK2 (threonine 183). Threonine 269 and threonine 355 each carry phosphothreonine. The AIS stretch occupies residues 302–381 (EALKEVCEKF…PERVPFLVAE (80 aa)). A Phosphoserine modification is found at serine 356. Serine 360 is modified (phosphoserine; by ULK1). Phosphothreonine; by ULK1 is present on threonine 368. Threonine 382 carries the post-translational modification Phosphothreonine. Serine 397 is subject to Phosphoserine; by ULK1. A phosphoserine mark is found at serine 467 and serine 486. The segment at 484-536 (AKSGTATPQRSGSISNYRSCQRSDSDAEAQGKPSEVSLTSSVTSLDSSPVDVA) is disordered. Over residues 485–505 (KSGTATPQRSGSISNYRSCQR) the composition is skewed to polar residues. A Phosphoserine; by ULK1 modification is found at serine 486. Threonine 488 is modified (phosphothreonine; by ULK1). Threonine 490 carries the post-translational modification Phosphothreonine. Phosphoserine occurs at positions 496, 508, 524, and 527. Residues 516–535 (PSEVSLTSSVTSLDSSPVDV) are compositionally biased toward low complexity.

This sequence belongs to the protein kinase superfamily. CAMK Ser/Thr protein kinase family. SNF1 subfamily. In terms of assembly, AMPK is a heterotrimer of an alpha catalytic subunit (PRKAA1 or PRKAA2), a beta (PRKAB1 or PRKAB2) and a gamma non-catalytic subunits (PRKAG1, PRKAG2 or PRKAG3). Interacts with FNIP1 and FNIP2. The cofactor is Mg(2+). Ubiquitinated. In terms of processing, phosphorylated at Thr-183 by STK11/LKB1 in complex with STE20-related adapter-alpha (STRADA) pseudo kinase and CAB39. Also phosphorylated at Thr-183 by CAMKK2; triggered by a rise in intracellular calcium ions, without detectable changes in the AMP/ATP ratio. CAMKK1 can also phosphorylate Thr-183, but at a much lower level. Dephosphorylated by protein phosphatase 2A and 2C (PP2A and PP2C). Phosphorylated by ULK1 and ULK2; leading to negatively regulate AMPK activity and suggesting the existence of a regulatory feedback loop between ULK1, ULK2 and AMPK. There is some ambiguity for some phosphosites: Ser-360/Thr-368 and Ser-486/Thr-488. Dephosphorylated by PPM1A and PPM1B. Post-translationally, glycosylated; O-GlcNAcylated by OGT, promoting the AMP-activated protein kinase (AMPK) activity. Low expression in kidney, liver, lung, heart and brain.

It localises to the cytoplasm. The protein localises to the nucleus. It catalyses the reaction L-seryl-[protein] + ATP = O-phospho-L-seryl-[protein] + ADP + H(+). The catalysed reaction is L-threonyl-[protein] + ATP = O-phospho-L-threonyl-[protein] + ADP + H(+). The enzyme catalyses L-seryl-[acetyl-CoA carboxylase] + ATP = O-phospho-L-seryl-[acetyl-CoA carboxylase] + ADP + H(+). It carries out the reaction L-seryl-[3-hydroxy-3-methylglutaryl-coenzyme A reductase] + ATP = O-phospho-L-seryl-[3-hydroxy-3-methylglutaryl-coenzyme A reductase] + ADP + H(+). It catalyses the reaction L-seryl-[tau protein] + ATP = O-phospho-L-seryl-[tau protein] + ADP + H(+). The catalysed reaction is L-threonyl-[tau protein] + ATP = O-phospho-L-threonyl-[tau protein] + ADP + H(+). With respect to regulation, activated by phosphorylation on Thr-183. Binding of AMP to non-catalytic gamma subunit (PRKAG1, PRKAG2 or PRKAG3) results in allosteric activation, inducing phosphorylation on Thr-183. AMP-binding to gamma subunit also sustains activity by preventing dephosphorylation of Thr-183. ADP also stimulates Thr-183 phosphorylation, without stimulating already phosphorylated AMPK. ATP promotes dephosphorylation of Thr-183, rendering the enzyme inactive. Under physiological conditions AMPK mainly exists in its inactive form in complex with ATP, which is much more abundant than AMP. Selectively inhibited by compound C (6-[4-(2-Piperidin-1-yl-ethoxy)-phenyl)]-3-pyridin-4-yl-pyyrazolo[1,5-a] pyrimidine. Activated by resveratrol, a natural polyphenol present in red wine, and S17834, a synthetic polyphenol. In terms of biological role, catalytic subunit of AMP-activated protein kinase (AMPK), an energy sensor protein kinase that plays a key role in regulating cellular energy metabolism. In response to reduction of intracellular ATP levels, AMPK activates energy-producing pathways and inhibits energy-consuming processes: inhibits protein, carbohydrate and lipid biosynthesis, as well as cell growth and proliferation. AMPK acts via direct phosphorylation of metabolic enzymes, and by longer-term effects via phosphorylation of transcription regulators. Regulates lipid synthesis by phosphorylating and inactivating lipid metabolic enzymes such as ACACA, ACACB, GYS1, HMGCR and LIPE; regulates fatty acid and cholesterol synthesis by phosphorylating acetyl-CoA carboxylase (ACACA and ACACB) and hormone-sensitive lipase (LIPE) enzymes, respectively. Promotes lipolysis of lipid droplets by mediating phosphorylation of isoform 1 of CHKA (CHKalpha2). Regulates insulin-signaling and glycolysis by phosphorylating IRS1, PFKFB2 and PFKFB3. AMPK stimulates glucose uptake in muscle by increasing the translocation of the glucose transporter SLC2A4/GLUT4 to the plasma membrane, possibly by mediating phosphorylation of TBC1D4/AS160. Regulates transcription and chromatin structure by phosphorylating transcription regulators involved in energy metabolism such as CRTC2/TORC2, FOXO3, histone H2B, HDAC5, MEF2C, MLXIPL/ChREBP, EP300, HNF4A, p53/TP53, SREBF1, SREBF2 and PPARGC1A. Acts as a key regulator of glucose homeostasis in liver by phosphorylating CRTC2/TORC2, leading to CRTC2/TORC2 sequestration in the cytoplasm. In response to stress, phosphorylates 'Ser-36' of histone H2B (H2BS36ph), leading to promote transcription. Acts as a key regulator of cell growth and proliferation by phosphorylating FNIP1, TSC2, RPTOR, WDR24 and ATG1/ULK1: in response to nutrient limitation, negatively regulates the mTORC1 complex by phosphorylating RPTOR component of the mTORC1 complex and by phosphorylating and activating TSC2. Also phosphorylates and inhibits GATOR2 subunit WDR24 in response to nutrient limitation, leading to suppress glucose-mediated mTORC1 activation. In response to energetic stress, phosphorylates FNIP1, inactivating the non-canonical mTORC1 signaling, thereby promoting nuclear translocation of TFEB and TFE3, and inducing transcription of lysosomal or autophagy genes. In response to nutrient limitation, promotes autophagy by phosphorylating and activating ATG1/ULK1. In that process, it also activates WDR45/WIPI4. Phosphorylates CASP6, thereby preventing its autoprocessing and subsequent activation. In response to nutrient limitation, phosphorylates transcription factor FOXO3 promoting FOXO3 mitochondrial import. Also acts as a regulator of cellular polarity by remodeling the actin cytoskeleton; probably by indirectly activating myosin. AMPK also acts as a regulator of circadian rhythm by mediating phosphorylation of CRY1, leading to destabilize it. May regulate the Wnt signaling pathway by phosphorylating CTNNB1, leading to stabilize it. Also has tau-protein kinase activity: in response to amyloid beta A4 protein (APP) exposure, activated by CAMKK2, leading to phosphorylation of MAPT/TAU; however the relevance of such data remains unclear in vivo. Also phosphorylates CFTR, EEF2K, KLC1, NOS3 and SLC12A1. Regulates hepatic lipogenesis. Activated via SIRT3, represses sterol regulatory element-binding protein (SREBP) transcriptional activities and ATP-consuming lipogenesis to restore cellular energy balance. Upon stress, regulates mitochondrial fragmentation through phosphorylation of MTFR1L. The polypeptide is 5'-AMP-activated protein kinase catalytic subunit alpha-1 (Prkaa1) (Rattus norvegicus (Rat)).